The primary structure comprises 89 residues: Large ribosomal subunit protein bL27 (89 aa).

This sequence belongs to the bacterial ribosomal protein bL27 family.

This chain is Large ribosomal subunit protein bL27, found in Afipia carboxidovorans (strain ATCC 49405 / DSM 1227 / KCTC 32145 / OM5) (Oligotropha carboxidovorans).